A 347-amino-acid chain; its full sequence is S-adenosylmethionine:tRNA ribosyltransferase-isomerase (347 aa).

It belongs to the QueA family. In terms of assembly, monomer.

It is found in the cytoplasm. It carries out the reaction 7-aminomethyl-7-carbaguanosine(34) in tRNA + S-adenosyl-L-methionine = epoxyqueuosine(34) in tRNA + adenine + L-methionine + 2 H(+). It participates in tRNA modification; tRNA-queuosine biosynthesis. Functionally, transfers and isomerizes the ribose moiety from AdoMet to the 7-aminomethyl group of 7-deazaguanine (preQ1-tRNA) to give epoxyqueuosine (oQ-tRNA). The sequence is that of S-adenosylmethionine:tRNA ribosyltransferase-isomerase from Streptococcus thermophilus (strain ATCC BAA-491 / LMD-9).